Consider the following 92-residue polypeptide: Endoribonuclease HigB (92 aa).

Histidine 92 is a catalytic residue.

In terms of assembly, forms a complex with the antitoxin HigA which inhibits the mRNA interferase activity. The heterodimer dimerizes to form a HigB-(HigA)2-HigB tetramer that is able to bind to the DNA.

Toxic component of a type II toxin-antitoxin (TA) system. A ribosome-associated translation-dependent mRNA interferase. Inhibits translation by sequence-specific cleavage of mRNA. Prefers either in-frame or out-of-frame 5'-AAA-3' codons (lysine). Also cleaves the first three AAAs of stretches of four or more A sequences. 20% of codons containing AA are cleaved and occassionally cuts even at a single A. The sequence is that of Endoribonuclease HigB from Proteus vulgaris.